The primary structure comprises 768 residues: MENFSNSKRIKSEKLGIDLIRSRIEGYVKDLKLRHVDVDELVERIVSGWCEDMTRKETIDYCSETAASMITKHPEYGQISSRIIVSYIHEITMDSFVEKIKYIQKHRGMVSEEMYGIILEHGETIEGMINYENDFLFSYFGILTLMKSYLIKVGEEIIERPQDMFMRVALQIHKTDFEKVREVYNLLSGHYFTHATPTLYNSCLKNPQLASCFLITPREDSIEGVYHMINQAAIITKYSGGIGLNLHGIRSKGSSLRSTGGRSNGIIPLIQVLNATKRYINQGAERRPGSIAIFLEPWHMEIFDFLELRKNTGPEEFRARDIFTALWINDLFMERVKNNEEWSLFCPSQAVGLSDVWGEEFNALYCKYEKTISRTVVPAQKLWKAIIEAQIETGTPYMCYKDACNRLSNQQHLGTIKSSNLCAEIVEYSSGEETSVCNLASICLPMFVKDGWFDFEAFRRVVKILTVNLNRVIDFNYYPVEEARRSNMRNRPIGIGVQGLADLFAILRLAFESDGARSLNQDIFEAMYYSAMEASCELAEKEGPFPSYEGSPISKGIFHFELAGRKASGNWDWEGLRERIRRHGVRNSLLIALMPTAGTSQIFGNNEAFEPHASNIYTRRTHAGEFQIVNQHLVNDLVRLGLWSYEMKNLVIENEGSIQNITSIPHEIREIYKTAWEIKMKSVIDLAADRQVFVDQSQSLNIFIAKPTYSQLTSMHFYGYHCGLKTGMYYLRTRPITSAIKFTVDKKLAEKTLSSMNDTDDPCSMCSS.

ATP-binding positions include 7 to 8 and 13 to 19; these read SK and EKLGIDL. GDP-binding residues include threonine 196 and serine 211. An intrachain disulfide couples cysteine 212 to cysteine 437. Residues 220 to 222, lysine 237, and arginine 250 each bind dTTP; that span reads DSI. Asparagine 420 lines the GDP pocket. The Proton acceptor role is filled by asparagine 420. Cysteine 422 functions as the Cysteine radical intermediate in the catalytic mechanism. Residue glutamate 424 participates in GDP binding. Catalysis depends on glutamate 424, which acts as the Proton acceptor.

It belongs to the ribonucleoside diphosphate reductase large chain family. Heterodimer of a large and a small subunit.

The enzyme catalyses a 2'-deoxyribonucleoside 5'-diphosphate + [thioredoxin]-disulfide + H2O = a ribonucleoside 5'-diphosphate + [thioredoxin]-dithiol. With respect to regulation, under complex allosteric control mediated by deoxynucleoside triphosphates and ATP binding to separate specificity and activation sites on the large subunit. The type of nucleotide bound at the specificity site determines substrate preference. It seems probable that ATP makes the enzyme reduce CDP and UDP, dGTP favors ADP reduction and dTTP favors GDP reduction. Stimulated by ATP and inhibited by dATP binding to the activity site. In terms of biological role, provides the precursors necessary for DNA synthesis. Catalyzes the biosynthesis of deoxyribonucleotides from the corresponding ribonucleotides. The sequence is that of Ribonucleoside-diphosphate reductase large chain from Encephalitozoon cuniculi (strain GB-M1) (Microsporidian parasite).